The following is a 359-amino-acid chain: 3-dehydroquinate synthase (359 aa).

NAD(+)-binding positions include 70–75 (DAEGGK), 104–108 (GAATD), 128–129 (TT), Lys141, and Lys150. Glu183, His246, and His262 together coordinate Zn(2+).

It belongs to the sugar phosphate cyclases superfamily. Dehydroquinate synthase family. Requires Co(2+) as cofactor. Zn(2+) serves as cofactor. It depends on NAD(+) as a cofactor.

The protein resides in the cytoplasm. It catalyses the reaction 7-phospho-2-dehydro-3-deoxy-D-arabino-heptonate = 3-dehydroquinate + phosphate. The protein operates within metabolic intermediate biosynthesis; chorismate biosynthesis; chorismate from D-erythrose 4-phosphate and phosphoenolpyruvate: step 2/7. Functionally, catalyzes the conversion of 3-deoxy-D-arabino-heptulosonate 7-phosphate (DAHP) to dehydroquinate (DHQ). The protein is 3-dehydroquinate synthase of Mycolicibacterium gilvum (strain PYR-GCK) (Mycobacterium gilvum (strain PYR-GCK)).